The following is a 233-amino-acid chain: Putative cobalt transport protein CbiM (233 aa).

6 helical membrane-spanning segments follow: residues proline 9–valine 29, proline 43–valine 63, leucine 75–phenylalanine 95, threonine 107–tyrosine 127, threonine 138–valine 158, and isoleucine 177–isoleucine 197.

It belongs to the CbiM family. Forms an energy-coupling factor (ECF) transporter complex composed of an ATP-binding protein (A component, CbiO), a transmembrane protein (T component, CbiQ) and 2 possible substrate-capture proteins (S components, CbiM and CbiN) of unknown stoichimetry.

It is found in the cell membrane. The protein operates within cofactor biosynthesis; adenosylcobalamin biosynthesis. Functionally, part of the energy-coupling factor (ECF) transporter complex CbiMNOQ involved in cobalt import. This Methanocaldococcus jannaschii (strain ATCC 43067 / DSM 2661 / JAL-1 / JCM 10045 / NBRC 100440) (Methanococcus jannaschii) protein is Putative cobalt transport protein CbiM.